Here is a 325-residue protein sequence, read N- to C-terminus: Tagatose 1,6-diphosphate aldolase (325 aa).

It belongs to the aldolase LacD family.

The catalysed reaction is D-tagatofuranose 1,6-bisphosphate = D-glyceraldehyde 3-phosphate + dihydroxyacetone phosphate. It participates in carbohydrate metabolism; D-tagatose 6-phosphate degradation; D-glyceraldehyde 3-phosphate and glycerone phosphate from D-tagatose 6-phosphate: step 2/2. The sequence is that of Tagatose 1,6-diphosphate aldolase from Staphylococcus epidermidis (strain ATCC 35984 / DSM 28319 / BCRC 17069 / CCUG 31568 / BM 3577 / RP62A).